Consider the following 332-residue polypeptide: MIDSRLPLTDIHRHLDGNIRAQTILDLGRQFNLALPADELEALRPHVQITHAEPDLVSFLQKLDWGVAVLGDLEACRRVAYENVEDAANAGLHYAELRFSPYYMAMKHQLPVTGVVEAVIDGIRSGSRDLGIDVRLIGIMSRTFGEAACLQELEGLLAHRDGITALDLAGDELGFPGGLFLNHFNRARDAGLRITVHAGEAAGPESIWQAIRELGAERIGHGVKAVEDPALMDFLAEHGIGIESCLTSNIQTSTVASLAQHPLAKFLRHGVMASINTDDPAVQGIEIEHEYLVAAPQAGLTPAEIRTAQENGLKMAFLSEQEKQTLRDKVRG.

Zn(2+)-binding residues include His-12 and His-14. Positions 14, 16, and 170 each coordinate substrate. His-197 contacts Zn(2+). Glu-200 (proton donor) is an active-site residue. Asp-278 provides a ligand contact to Zn(2+). Asp-279 serves as a coordination point for substrate.

The protein belongs to the metallo-dependent hydrolases superfamily. Adenosine and AMP deaminases family. Adenosine deaminase subfamily. Requires Zn(2+) as cofactor.

It carries out the reaction adenosine + H2O + H(+) = inosine + NH4(+). The catalysed reaction is 2'-deoxyadenosine + H2O + H(+) = 2'-deoxyinosine + NH4(+). Functionally, catalyzes the hydrolytic deamination of adenosine and 2-deoxyadenosine. In Serratia proteamaculans (strain 568), this protein is Adenosine deaminase.